Reading from the N-terminus, the 464-residue chain is Asparagine--tRNA ligase (464 aa).

It belongs to the class-II aminoacyl-tRNA synthetase family. As to quaternary structure, homodimer.

It localises to the cytoplasm. The enzyme catalyses tRNA(Asn) + L-asparagine + ATP = L-asparaginyl-tRNA(Asn) + AMP + diphosphate + H(+). This Cytophaga hutchinsonii (strain ATCC 33406 / DSM 1761 / CIP 103989 / NBRC 15051 / NCIMB 9469 / D465) protein is Asparagine--tRNA ligase.